The primary structure comprises 552 residues: Elongator complex protein 3 (552 aa).

Residues 84 to 374 (RTASGIAVVA…YRVQRDIPMP (291 aa)) form the Radical SAM core domain. Positions 101, 111, and 114 each coordinate [4Fe-4S] cluster. Acetyl-CoA-binding positions include K166, 476–479 (ELHV), 499–501 (FGM), and Y532. The 155-residue stretch at 398-552 (TTCRDVRTRE…YMSKSIEENN (155 aa)) folds into the N-acetyltransferase domain.

It belongs to the ELP3 family. In terms of assembly, component of the elongator complex composed of Elp1, Elp2, Elp3, Elp4, Elp5 and Elp6. The elongator complex associates with and stabilizes microtubules; efficient interaction requires the full complex. [4Fe-4S] cluster is required as a cofactor.

Its subcellular location is the cytoplasm. The protein localises to the nucleus. It localises to the cytoskeleton. It is found in the spindle. The catalysed reaction is uridine(34) in tRNA + acetyl-CoA + S-adenosyl-L-methionine + H2O = 5-(carboxymethyl)uridine(34) in tRNA + 5'-deoxyadenosine + L-methionine + CoA + 2 H(+). It participates in tRNA modification; 5-methoxycarbonylmethyl-2-thiouridine-tRNA biosynthesis. Its function is as follows. Catalytic tRNA acetyltransferase subunit of the elongator complex, which is required for multiple tRNA modifications, including mcm5U (5-methoxycarbonylmethyl uridine), mcm5s2U (5-methoxycarbonylmethyl-2-thiouridine), and ncm5U (5-carbamoylmethyl uridine). In the elongator complex, acts as a tRNA uridine(34) acetyltransferase by mediating formation of carboxymethyluridine in the wobble base at position 34 in tRNAs. Binding by the elongator complex stabilizes microtubules and promotes their growth. This induces central spindle asymmetry, promoting polarized signaling endosome trafficking during asymmetric cell division and cell fate assignation of sensory organ precursor cells. Plays a role in the control of synaptic bouton expansion. Required for larval development. Involved in protein synthesis-dependent long-term memory formation, probably as part of the elongator complex. In Drosophila melanogaster (Fruit fly), this protein is Elongator complex protein 3.